A 70-amino-acid chain; its full sequence is Myotoxin (70 aa).

Residues 1 to 22 (MKILYLLFAFLFLAFLSEPGNA) form the signal peptide. 3 disulfide bridges follow: C26-C58, C33-C52, and C40-C59.

This sequence belongs to the crotamine-myotoxin family. Monomer. In terms of tissue distribution, expressed by the venom gland.

The protein resides in the secreted. Functionally, cationic peptide that possesses multiple functions. It acts as a cell-penetrating peptide (CPP), and as a potent voltage-gated potassium channel (Kv) inhibitor. It exhibits antimicrobial activities, hind limb paralysis, and severe muscle necrosis by a non-enzymatic mechanism. The protein is Myotoxin of Crotalus helleri (Southern pacific rattlesnake).